The primary structure comprises 492 residues: Cobyric acid synthase (492 aa).

A GATase cobBQ-type domain is found at Val-253–Ala-441. Cys-334 functions as the Nucleophile in the catalytic mechanism. Residue His-433 is part of the active site.

Belongs to the CobB/CobQ family. CobQ subfamily.

The protein operates within cofactor biosynthesis; adenosylcobalamin biosynthesis. Functionally, catalyzes amidations at positions B, D, E, and G on adenosylcobyrinic A,C-diamide. NH(2) groups are provided by glutamine, and one molecule of ATP is hydrogenolyzed for each amidation. The chain is Cobyric acid synthase from Azoarcus sp. (strain BH72).